An 828-amino-acid chain; its full sequence is BEN domain-containing protein 3 (828 aa).

Lys20 participates in a covalent cross-link: Glycyl lysine isopeptide (Lys-Gly) (interchain with G-Cter in SUMO); alternate. A Glycyl lysine isopeptide (Lys-Gly) (interchain with G-Cter in SUMO1); alternate cross-link involves residue Lys20. A Glycyl lysine isopeptide (Lys-Gly) (interchain with G-Cter in SUMO2); alternate cross-link involves residue Lys20. Glycyl lysine isopeptide (Lys-Gly) (interchain with G-Cter in SUMO2) cross-links involve residues Lys41, Lys56, Lys58, Lys73, Lys128, Lys129, Lys137, Lys142, and Lys158. A Nuclear localization signal motif is present at residues 56-58 (KRK). A Phosphoserine modification is found at Ser164. The interval 164–184 (SPSSLRLLNEPQKRDCGSTGA) is disordered. A Glycyl lysine isopeptide (Lys-Gly) (interchain with G-Cter in SUMO2) cross-link involves residue Lys176. In terms of domain architecture, BEN 1 spans 242–343 (PPPEYQLTAA…DFFSRFWAQR (102 aa)). Position 379 is a phosphoserine (Ser379). The BEN 2 domain occupies 387-487 (ASDHVVDTQD…DELEGLGLDA (101 aa)). Lys427 participates in a covalent cross-link: Glycyl lysine isopeptide (Lys-Gly) (interchain with G-Cter in SUMO2). The tract at residues 483-504 (LGLDAGSEGDPPRDDCYDSSSL) is disordered. Ser489 bears the Phosphoserine mark. A Glycyl lysine isopeptide (Lys-Gly) (interchain with G-Cter in SUMO); alternate cross-link involves residue Lys512. A Glycyl lysine isopeptide (Lys-Gly) (interchain with G-Cter in SUMO2); alternate cross-link involves residue Lys512. Lys528 is covalently cross-linked (Glycyl lysine isopeptide (Lys-Gly) (interchain with G-Cter in SUMO2)). One can recognise a BEN 3 domain in the interval 548–650 (VPGADCLLSK…ERCRRRDTEQ (103 aa)). Lys700 is covalently cross-linked (Glycyl lysine isopeptide (Lys-Gly) (interchain with G-Cter in SUMO2)). Positions 715–816 (VPSPYLLSDK…ERCRRPNRKK (102 aa)) constitute a BEN 4 domain.

As to quaternary structure, homooligomer, probably a homooctamer. Interacts with HDAC2 and HDAC3, but not HDAC1. Interacts with SALL4. Interacts with SMARCA5/SNF2H, BAZ2A/TIP5 and USP21. Interacts with the nucleosome remodeling and histone deacetylase (NuRD) repressor complex. Interacts (via BEN domains 1 and 3) with ERCC6L (via N-terminal TPR repeat); the interaction is direct. In terms of processing, sumoylated at Lys-20 by SUMO1 and at Lys-512 by SUMO1, SUMO2 and SUMO3. Sumoylation probably occurs sequentially, with that of Lys-20 preceding that of Lys-512. It does not alter association with heterochromatin, but is required for the repression of transcription. Expressed at least in heart, kidney, liver, ovary and spleen, with highest levels in spleen and lowest in heart. Expressed on the surface of T-cells.

It is found in the nucleus. It localises to the nucleolus. In terms of biological role, transcriptional repressor which associates with the NoRC (nucleolar remodeling complex) complex and plays a key role in repressing rDNA transcription. The sumoylated form modulates the stability of the NoRC complex component BAZ2A/TIP5 by controlling its USP21-mediated deubiquitination. Binds to unmethylated major satellite DNA and is involved in the recruitment of the Polycomb repressive complex 2 (PRC2) to major satellites. Stimulates the ERCC6L translocase and ATPase activities. The protein is BEN domain-containing protein 3 (BEND3) of Homo sapiens (Human).